Consider the following 403-residue polypeptide: Shaggy-related protein kinase GSK4 (403 aa).

The 285-residue stretch at 71–355 folds into the Protein kinase domain; sequence YMAERVVGTG…ALEACAHSFF (285 aa). ATP-binding positions include 77–85 and Lys-100; that span reads VGTGSFGVV. The active-site Proton acceptor is the Asp-196.

Belongs to the protein kinase superfamily. CMGC Ser/Thr protein kinase family. GSK-3 subfamily. As to quaternary structure, interacts with LIC.

It catalyses the reaction L-seryl-[protein] + ATP = O-phospho-L-seryl-[protein] + ADP + H(+). The enzyme catalyses L-threonyl-[protein] + ATP = O-phospho-L-threonyl-[protein] + ADP + H(+). Its function is as follows. Probable serine-threonine kinase that may regulate brassinosteroid signaling. This chain is Shaggy-related protein kinase GSK4, found in Oryza sativa subsp. japonica (Rice).